We begin with the raw amino-acid sequence, 580 residues long: M-phase inducer phosphatase 2 (580 aa).

Residues 1-24 are disordered; sequence MEVPQPEPAPGSALSPAGVCGGAQ. Serine 42 carries the post-translational modification Phosphoserine. Positions 89-107 are enriched in low complexity; sequence SLSRRASESSLSSESSESS. Disordered regions lie at residues 89–117 and 165–196; these read SLSR…DSPS and NITN…ENDG. At serine 169 the chain carries Phosphoserine; by MELK. A Phosphoserine modification is found at serine 249. At serine 323 the chain carries Phosphoserine; by MELK and MAPK14. The segment at 331-370 is disordered; sequence PILKRLERPQDRDTPVQNKRRRSVTPPEEQQEAEEPKARV. Over residues 334 to 344 the composition is skewed to basic and acidic residues; the sequence is KRLERPQDRDT. Position 353 is a phosphoserine; by AURKA (serine 353). Position 375 is a phosphoserine; by BRSK1 and MAPK14 (serine 375). Positions 431-538 constitute a Rhodanese domain; sequence IVDKFVIVDC…FFPQHPNFCE (108 aa). The residue at position 470 (serine 470) is a Phosphoserine. Residue cysteine 487 is part of the active site. Serine 563 is subject to Phosphoserine.

This sequence belongs to the MPI phosphatase family. As to quaternary structure, interacts with MAPK14 and 14-3-3 proteins. In terms of processing, phosphorylated by BRSK1 in vitro. Phosphorylated by CHEK1, which inhibits the activity of this protein. Phosphorylation at Ser-353 by AURKA might locally participate in the control of the onset of mitosis. Phosphorylation by MELK at Ser-169 promotes localization to the centrosome and the spindle poles during mitosis. Phosphorylation at Ser-323 and Ser-375 by MAPK14 is required for binding to 14-3-3 proteins.

The protein localises to the cytoplasm. The protein resides in the cytoskeleton. It localises to the microtubule organizing center. Its subcellular location is the centrosome. It is found in the spindle pole. It catalyses the reaction O-phospho-L-tyrosyl-[protein] + H2O = L-tyrosyl-[protein] + phosphate. Stimulated by B-type cyclins. Tyrosine protein phosphatase which functions as a dosage-dependent inducer of mitotic progression. Directly dephosphorylates CDK1 and stimulates its kinase activity. Required for G2/M phases of the cell cycle progression and abscission during cytokinesis in a ECT2-dependent manner. The three isoforms seem to have a different level of activity. The chain is M-phase inducer phosphatase 2 (CDC25B) from Homo sapiens (Human).